The chain runs to 120 residues: U13-lycotoxin-Ls1f (120 aa).

Residues 1-16 form the signal peptide; sequence MKILFVLISILYAVYC. A propeptide spanning residues 17 to 54 is cleaved from the precursor; the sequence is FSSEEDVDSAYLANELEPVEDINSEQYAALEPKEEQER. Intrachain disulfides connect cysteine 56–cysteine 70, cysteine 63–cysteine 76, cysteine 69–cysteine 87, and cysteine 78–cysteine 85. Residues 56 to 95 form the Agouti domain; the sequence is CAGMGQDCKDDCDCCLNIATCNCWFGRYFCSCTFGDYQTC.

It belongs to the neurotoxin 05 (agouti) family. Post-translationally, contains 6 disulfide bonds. Expressed by the venom gland.

Its subcellular location is the secreted. This chain is U13-lycotoxin-Ls1f, found in Lycosa singoriensis (Wolf spider).